We begin with the raw amino-acid sequence, 345 residues long: Phenylalanine--tRNA ligase alpha subunit (345 aa).

Residue glutamate 259 coordinates Mg(2+).

It belongs to the class-II aminoacyl-tRNA synthetase family. Phe-tRNA synthetase alpha subunit type 1 subfamily. Tetramer of two alpha and two beta subunits. Mg(2+) is required as a cofactor.

It localises to the cytoplasm. The catalysed reaction is tRNA(Phe) + L-phenylalanine + ATP = L-phenylalanyl-tRNA(Phe) + AMP + diphosphate + H(+). This chain is Phenylalanine--tRNA ligase alpha subunit, found in Lactococcus lactis subsp. cremoris (strain MG1363).